Reading from the N-terminus, the 259-residue chain is Leucine-rich repeat-containing protein 3B (259 aa).

Residues 1-33 form the signal peptide; sequence MNLVDLWLTRSLSMCLLLQSFVLMILCFHSASM. The 31-residue stretch at 34 to 64 folds into the LRRNT domain; it reads CPKGCLCSSSGGLNVTCSNANLKEIPRDLPP. Residue Asn-47 is glycosylated (N-linked (GlcNAc...) asparagine). LRR repeat units follow at residues 65–86, 89–110, and 114–135; these read ETVL…IFKD, QLRV…AFKG, and TLQT…AFNN. N-linked (GlcNAc...) asparagine glycosylation is present at Asn-94. The LRRCT domain occupies 145–197; sequence NPWHCDCTLQQVLRSMVSNHETAHNVICKTSVLDEHAGRPFLNAANDADLCNL. The helical transmembrane segment at 205 to 225 threads the bilayer; sequence AMLVTMFGWFTMVISYVVYYV.

The protein belongs to the LRRC3 family.

It localises to the membrane. This is Leucine-rich repeat-containing protein 3B (LRRC3B) from Bos taurus (Bovine).